A 1342-amino-acid polypeptide reads, in one-letter code: DNA-directed RNA polymerase subunit beta (1342 aa).

The protein belongs to the RNA polymerase beta chain family. The RNAP catalytic core consists of 2 alpha, 1 beta, 1 beta' and 1 omega subunit. When a sigma factor is associated with the core the holoenzyme is formed, which can initiate transcription.

The enzyme catalyses RNA(n) + a ribonucleoside 5'-triphosphate = RNA(n+1) + diphosphate. Functionally, DNA-dependent RNA polymerase catalyzes the transcription of DNA into RNA using the four ribonucleoside triphosphates as substrates. The protein is DNA-directed RNA polymerase subunit beta of Blochmanniella floridana.